The primary structure comprises 430 residues: Gamma-glutamyl phosphate reductase (430 aa).

Belongs to the gamma-glutamyl phosphate reductase family.

Its subcellular location is the cytoplasm. The catalysed reaction is L-glutamate 5-semialdehyde + phosphate + NADP(+) = L-glutamyl 5-phosphate + NADPH + H(+). It participates in amino-acid biosynthesis; L-proline biosynthesis; L-glutamate 5-semialdehyde from L-glutamate: step 2/2. Its function is as follows. Catalyzes the NADPH-dependent reduction of L-glutamate 5-phosphate into L-glutamate 5-semialdehyde and phosphate. The product spontaneously undergoes cyclization to form 1-pyrroline-5-carboxylate. The polypeptide is Gamma-glutamyl phosphate reductase (Psychrobacter arcticus (strain DSM 17307 / VKM B-2377 / 273-4)).